The following is an 85-amino-acid chain: U4-theraphotoxin-Hhn1a (85 aa).

The first 22 residues, 1-22, serve as a signal peptide directing secretion; that stretch reads MKVTLIAILTCAAVLVLRTTAA. Residues 23-48 constitute a propeptide that is removed on maturation; sequence EELEAESQLMEVGMPDTELAAVDEER. Disulfide bonds link C52–C66, C56–C77, and C71–C82.

It belongs to the neurotoxin 12 (Hwtx-2) family. 02 (Hwtx-2) subfamily. In terms of assembly, monomer. In terms of tissue distribution, expressed by the venom gland.

It localises to the secreted. In terms of biological role, neurotoxin active on both insects and mammals. The protein is U4-theraphotoxin-Hhn1a of Cyriopagopus hainanus (Chinese bird spider).